Consider the following 174-residue polypeptide: ATP-dependent protease subunit HslV (174 aa).

Residue Thr-2 is part of the active site. Na(+)-binding residues include Gly-159, Asp-162, and Thr-165.

The protein belongs to the peptidase T1B family. HslV subfamily. A double ring-shaped homohexamer of HslV is capped on each side by a ring-shaped HslU homohexamer. The assembly of the HslU/HslV complex is dependent on binding of ATP.

The protein localises to the cytoplasm. The catalysed reaction is ATP-dependent cleavage of peptide bonds with broad specificity.. Its activity is regulated as follows. Allosterically activated by HslU binding. Its function is as follows. Protease subunit of a proteasome-like degradation complex believed to be a general protein degrading machinery. This Lacticaseibacillus casei (strain BL23) (Lactobacillus casei) protein is ATP-dependent protease subunit HslV.